Reading from the N-terminus, the 494-residue chain is UDP-N-acetylmuramoyl-L-alanyl-D-glutamate--L-lysine ligase (494 aa).

Ser-30 serves as a coordination point for UDP-N-acetyl-alpha-D-muramoyl-L-alanyl-D-glutamate. 110–116 is an ATP binding site; the sequence is GTNGKTS. Residues 152–153, Ser-179, and Arg-187 each bind UDP-N-acetyl-alpha-D-muramoyl-L-alanyl-D-glutamate; that span reads TT. The residue at position 219 (Lys-219) is an N6-carboxylysine. The short motif at 406 to 409 is the L-lysine recognition motif element; that stretch reads DNPA.

It belongs to the MurCDEF family. MurE subfamily. Carboxylation is probably crucial for Mg(2+) binding and, consequently, for the gamma-phosphate positioning of ATP.

It localises to the cytoplasm. The enzyme catalyses UDP-N-acetyl-alpha-D-muramoyl-L-alanyl-D-glutamate + L-lysine + ATP = UDP-N-acetyl-alpha-D-muramoyl-L-alanyl-gamma-D-glutamyl-L-lysine + ADP + phosphate + H(+). It participates in cell wall biogenesis; peptidoglycan biosynthesis. Functionally, catalyzes the addition of L-lysine to the nucleotide precursor UDP-N-acetylmuramoyl-L-alanyl-D-glutamate (UMAG) in the biosynthesis of bacterial cell-wall peptidoglycan. This is UDP-N-acetylmuramoyl-L-alanyl-D-glutamate--L-lysine ligase from Staphylococcus aureus (strain bovine RF122 / ET3-1).